Consider the following 551-residue polypeptide: Calnexin (551 aa).

The N-terminal stretch at 1-23 (MRPQNVAGVAGTGALIMAAGALA) is a signal peptide. The Lumenal portion of the chain corresponds to 24–477 (DQTVFHPTSL…QAIKQMPEVA (454 aa)). The tract at residues 293 to 315 (EEEPETIPDPEAEKPEEWDDEED) is disordered. Residues 478–498 (AGLAAAVFTLLGMLLALFGFI) form a helical membrane-spanning segment. Residues 499 to 551 (GSAPTKVKQTTVKTKAVAPVAPAGEEEKKALDQAGVEIPAEGSKKRVTRSTKE) are Cytoplasmic-facing. Positions 526-551 (KKALDQAGVEIPAEGSKKRVTRSTKE) are disordered.

The protein belongs to the calreticulin family.

It is found in the endoplasmic reticulum membrane. Endoplasmic reticulum (ER) chaperone that functions to stabilize non-native glycoproteins and retain them in the ER until they are properly folded or targeted for ER associated degradation (ERAD). With co-chaperone DNJ1, coordinately maintains ER homeostasis and contributes to maintenance of cell wall architecture. The sequence is that of Calnexin from Cryptococcus neoformans var. grubii serotype A (strain H99 / ATCC 208821 / CBS 10515 / FGSC 9487) (Filobasidiella neoformans var. grubii).